The following is a 79-amino-acid chain: Neurotoxin ShK-like1 (79 aa).

Positions 1–25 (MSRKLLAVLMVCTFFLIAASMGTNA) are cleaved as a signal peptide. A propeptide spanning residues 26-35 (LPFHEGIERR) is cleaved from the precursor. In terms of domain architecture, ShKT spans 39-78 (CVDKMPFVCMRKDIPAICKNRNHRSYAFIMDVCRKTCGQC). 3 disulfides stabilise this stretch: Cys-39–Cys-78, Cys-47–Cys-71, and Cys-56–Cys-75.

Expressed in nematocytes (in planulae and primary polyps). Is localized predominantly in the body column nematocytes and not in the tentacles (in primary polyps).

The protein localises to the nematocyst. Its subcellular location is the secreted. In terms of biological role, neurotoxin. In vivo, induces contraction paralysis followed by death (within 2 hours) on zebrafish larvae. Also induces body contraction in Nematostella 11-dpf polyps. The chain is Neurotoxin ShK-like1 from Nematostella vectensis (Starlet sea anemone).